A 128-amino-acid polypeptide reads, in one-letter code: Transcription antitermination protein NusB (128 aa).

This sequence belongs to the NusB family.

Involved in transcription antitermination. Required for transcription of ribosomal RNA (rRNA) genes. Binds specifically to the boxA antiterminator sequence of the ribosomal RNA (rrn) operons. This Listeria innocua serovar 6a (strain ATCC BAA-680 / CLIP 11262) protein is Transcription antitermination protein NusB.